The following is a 200-amino-acid chain: Inner membrane-spanning protein YciB (200 aa).

Helical transmembrane passes span 1–21 (MPPL…FFAN), 37–57 (IGAP…IALA), 66–86 (LPIM…LTLW), 103–123 (LFGG…GYVF), 136–156 (KLTL…EIVW), and 167–187 (FKVW…MPLI).

The protein belongs to the YciB family.

It is found in the cell inner membrane. Functionally, plays a role in cell envelope biogenesis, maintenance of cell envelope integrity and membrane homeostasis. The polypeptide is Inner membrane-spanning protein YciB (Brucella suis biovar 1 (strain 1330)).